The chain runs to 1948 residues: Receptor-type tyrosine-protein phosphatase S (1948 aa).

An N-terminal signal peptide occupies residues 1-29 (MAPTWGPGMVSVVGPMGLLVVLLVGGCAA). The Extracellular portion of the chain corresponds to 30-1282 (EEPPRFIKEP…PQPIVDGEEG (1253 aa)). Ig-like C2-type domains follow at residues 33-123 (PRFI…AKLT), 135-233 (PNID…ANLY), and 245-327 (PRFS…AQIT). 2 cysteine pairs are disulfide-bonded: cysteine 54–cysteine 107 and cysteine 156–cysteine 216. The important for binding to glycosaminoglycan chains stretch occupies residues 68-72 (KKGKK). Asparagine 263 and asparagine 308 each carry an N-linked (GlcNAc...) asparagine glycan. A disulfide bridge links cysteine 266 with cysteine 311. Fibronectin type-III domains lie at 334-424 (APGT…TGEQ), 429-523 (APRN…TQQG), 527-616 (QPMN…TLQS), 621-718 (PPQD…TDED), 723-831 (PPRK…TKGA), 832-930 (VLGR…TPRG), 931-1033 (HPQI…FLRD), and 1036-1120 (SPKN…TAFN). The tract at residues 700 to 724 (TEVGPGPESSPVVVRTDEDVPSAPP) is disordered. A compositionally biased stretch (low complexity) spans 701–713 (EVGPGPESSPVVV). A glycan (N-linked (GlcNAc...) asparagine) is linked at asparagine 733. N-linked (GlcNAc...) asparagine glycosylation occurs at asparagine 940. The helical transmembrane segment at 1283–1303 (LIWVIGPVLAVVFIICIVIAI) threads the bilayer. The Cytoplasmic segment spans residues 1304-1948 (LLYKNKPDSK…YLGSFDHYAT (645 aa)). 2 stretches are compositionally biased toward basic and acidic residues: residues 1311 to 1321 (DSKRKDSEPRT) and 1331 to 1340 (APHHPKDPVE). Residues 1311–1340 (DSKRKDSEPRTKCLLNNADLAPHHPKDPVE) form a disordered region. 2 Tyrosine-protein phosphatase domains span residues 1393–1648 (LSQE…LLEA) and 1680–1939 (MELE…ALEY). Substrate-binding positions include aspartate 1557, 1589-1595 (CSAGVGR), and glutamine 1633. The active-site Phosphocysteine intermediate is cysteine 1589. Catalysis depends on cysteine 1880, which acts as the Phosphocysteine intermediate.

This sequence belongs to the protein-tyrosine phosphatase family. Receptor class 2A subfamily. As to quaternary structure, binding to large heparan sulfate proteoglycan structures promotes oligomerization. Binding to chondroitin sulfate proteoglycan does not lead to oligomerization. Interacts (via Ig-like domains) with NTRK3. Interacts (via Ig-like domains) with NTRK1, but does not form detectable complexes with NTRK2. Interacts with PPFIA1, PPFIA2 and PPFIA3. A cleavage occurs, separating the extracellular domain from the transmembrane segment. This process called 'ectodomain shedding' is thought to be involved in receptor desensitization, signal transduction and/or membrane localization. As to expression, detected in peripheral blood plasmacytoid dendritic cells (at protein level). Detected in all tissues tested except for placenta and liver. Detected in peripheral blood plasmacytoid dendritic cells.

The protein localises to the cell membrane. It is found in the cell projection. Its subcellular location is the axon. It localises to the perikaryon. The protein resides in the cytoplasmic vesicle. The protein localises to the secretory vesicle. It is found in the synaptic vesicle membrane. Its subcellular location is the synapse. It localises to the synaptosome. The protein resides in the postsynaptic density. The protein localises to the neuron projection. It is found in the growth cone. The enzyme catalyses O-phospho-L-tyrosyl-[protein] + H2O = L-tyrosyl-[protein] + phosphate. Its function is as follows. Cell surface receptor that binds to glycosaminoglycans, including chondroitin sulfate proteoglycans and heparan sulfate proteoglycan. Binding to chondroitin sulfate and heparan sulfate proteoglycans has opposite effects on PTPRS oligomerization and regulation of neurite outgrowth. Contributes to the inhibition of neurite and axonal outgrowth by chondroitin sulfate proteoglycans, also after nerve transection. Plays a role in stimulating neurite outgrowth in response to the heparan sulfate proteoglycan GPC2. Required for normal brain development, especially for normal development of the pituitary gland and the olfactory bulb. Functions as a tyrosine phosphatase. Mediates dephosphorylation of NTRK1, NTRK2 and NTRK3. Plays a role in down-regulation of signaling cascades that lead to the activation of Akt and MAP kinases. Down-regulates TLR9-mediated activation of NF-kappa-B, as well as production of TNF, interferon alpha and interferon beta. This Homo sapiens (Human) protein is Receptor-type tyrosine-protein phosphatase S (PTPRS).